A 375-amino-acid chain; its full sequence is Mitochondrial phosphate carrier protein 3, mitochondrial (375 aa).

Residues 76-96 (AFYAACTFGGILSCGLTHMTV) form a helical membrane-spanning segment. Solcar repeat units lie at residues 76 to 160 (AFYA…FKKT), 173 to 257 (YKTL…IVEM), and 274 to 353 (LQLG…FKVF). Topologically, residues 97-134 (TPLDLVKCNMQIDPAKYKSISSGFGILLKEQGVKGFFR) are mitochondrial matrix. A helical membrane pass occupies residues 135–154 (GWVPTLLGYSAQGACKFGFY). The Mitochondrial intermembrane portion of the chain corresponds to 155–175 (EYFKKTYSDLAGPEYTAKYKT). The helical transmembrane segment at 176–196 (LIYLAGSASAEIIADIALCPF) threads the bilayer. The Mitochondrial matrix segment spans residues 197 to 231 (EAVKVRVQTQPGFARGMSDGFPKFIKSEGYGGLYK). Residues 232–251 (GLAPLWGRQIPYTMMKFASF) form a helical membrane-spanning segment. Residues 252–272 (ETIVEMIYKYAIPNPKSECSK) are Mitochondrial intermembrane-facing. Residues 273–293 (GLQLGVSFAGGYVAGVFCAIV) form a helical membrane-spanning segment. Residues 294–332 (SHPADNLVSFLNNAKGATVGDAVKKIGMVGLFTRGLPLR) lie on the Mitochondrial matrix side of the membrane. A helical membrane pass occupies residues 333–353 (IVMIGTLTGAQWGLYDAFKVF). The Mitochondrial intermembrane segment spans residues 354 to 375 (VGLPTTGGVAPAPAIAATEAKA).

It belongs to the mitochondrial carrier (TC 2.A.29) family. In terms of tissue distribution, expressed in stems, leaves and flowers. Strong expression in vascular tissues.

It is found in the mitochondrion inner membrane. Transport of phosphate groups from the cytosol to the mitochondrial matrix. Mediates salt stress tolerance through an ATP-dependent pathway and via modulation of the gibberellin metabolism. The protein is Mitochondrial phosphate carrier protein 3, mitochondrial (MPT3) of Arabidopsis thaliana (Mouse-ear cress).